We begin with the raw amino-acid sequence, 238 residues long: MYEVKLASFHGPLDLLLHLIKQYEIDIYDISMKILTEQYINYIKDVTDLDINVHGDYLVMASELLRIKSRMLLPESTETVEETEDPREGLMNQLIEYQNYRMLAEILNEKKKEEEKYFIKRGNDLSRFEKVDTSLELELVDLITAYYKAKQRQHVVKPTISMARDTYSIEDATKNIIENLQQKQSITFADFVTFSETKTQIVTLFMALLELMKTETVKIRQERTFGDIYIERGRRYNG.

Belongs to the ScpA family. Component of a cohesin-like complex composed of ScpA, ScpB and the Smc homodimer, in which ScpA and ScpB bind to the head domain of Smc. The presence of the three proteins is required for the association of the complex with DNA.

It localises to the cytoplasm. Functionally, participates in chromosomal partition during cell division. May act via the formation of a condensin-like complex containing Smc and ScpB that pull DNA away from mid-cell into both cell halves. The sequence is that of Segregation and condensation protein A from Macrococcus caseolyticus (strain JCSC5402) (Macrococcoides caseolyticum).